The chain runs to 474 residues: Cysteine--tRNA ligase (474 aa).

Residue cysteine 27 participates in Zn(2+) binding. Residues 29–39 carry the 'HIGH' region motif; sequence ITPYDHMHVGH. Zn(2+) is bound by residues cysteine 213, histidine 238, and glutamate 242. The 'KMSKS' region signature appears at 271–275; that stretch reads KMSKS. Lysine 274 contributes to the ATP binding site.

This sequence belongs to the class-I aminoacyl-tRNA synthetase family. Zn(2+) serves as cofactor.

The protein localises to the cytoplasm. It carries out the reaction tRNA(Cys) + L-cysteine + ATP = L-cysteinyl-tRNA(Cys) + AMP + diphosphate. This chain is Cysteine--tRNA ligase, found in Pyrobaculum neutrophilum (strain DSM 2338 / JCM 9278 / NBRC 100436 / V24Sta) (Thermoproteus neutrophilus).